Here is a 287-residue protein sequence, read N- to C-terminus: MDDFLSISLLSLAMLVGCYVAGIIPLAVNFSEERLKLVTVLGAGLLCGTALAVIVPEGVHALYEEVLEGKHHQASEAKQNVIASDKAAEISVVHEHEHSHDHTQLHAYIGVSLVLGFVFMLLVDQIGSSHVHSTDDPESARPSSSKITTTLGLVVHAAADGVALGAAASTSQTSVQLIVFVAIMLHKAPAAFGLVSFLMHAGLERNRIRKHLLVFALAAPAMSMLTYLGLSKSSKEALSEVNATGVAMLFSAGTFLYVATVHVLPEDTSTNQSGSSLSPRPLPSGKN.

A helical membrane pass occupies residues 4 to 24; it reads FLSISLLSLAMLVGCYVAGII. N-linked (GlcNAc...) asparagine glycosylation occurs at Asn29. A run of 5 helical transmembrane segments spans residues 35 to 55, 107 to 127, 147 to 167, 177 to 197, and 211 to 231; these read LKLVTVLGAGLLCGTALAVIV, AYIGVSLVLGFVFMLLVDQIG, ITTTLGLVVHAAADGVALGAA, LIVFVAIMLHKAPAAFGLVSF, and HLLVFALAAPAMSMLTYLGLS. Asn242 is a glycosylation site (N-linked (GlcNAc...) asparagine). The helical transmembrane segment at 245–265 threads the bilayer; sequence GVAMLFSAGTFLYVATVHVLP. Residues 268 to 287 are disordered; the sequence is TSTNQSGSSLSPRPLPSGKN. Residue Asn271 is glycosylated (N-linked (GlcNAc...) asparagine). The segment covering 273–287 has biased composition (low complexity); sequence SGSSLSPRPLPSGKN.

This sequence belongs to the ZIP transporter (TC 2.A.5) family.

The protein localises to the golgi apparatus. The protein resides in the trans-Golgi network membrane. It localises to the cell membrane. Its subcellular location is the cytoplasm. It is found in the perinuclear region. The protein localises to the mitochondrion. The protein resides in the nucleus. The catalysed reaction is Zn(2+)(in) = Zn(2+)(out). Functionally, transports zinc ions across cell and organelle membranes into the cytoplasm and regulates intracellular zinc homeostasis. Participates in the zinc ions efflux out of the secretory compartments. Regulates intracellular zinc level, resulting in the enhancement of AKT1 and MAPK3/MAPK1 (Erk1/2) phosphorylation in response to the BCR activation. Also functions as a membrane androgen receptor that mediates, through a G protein, the non-classical androgen signaling pathway, characterized by the activation of MAPK3/MAPK1 (Erk1/2) and transcription factors CREB1 or ATF1. This pathway contributes to CLDN1 and CLDN5 expression and tight junction formation between adjacent Sertoli cells. Mediates androgen-induced vascular endothelial cell proliferation through activation of an inhibitory G protein leading to the AKT1 and MAPK3/MAPK1 (Erk1/2) activation which in turn modulate inhibition (phosphorylation) of GSK3B and CCND1 transcription. Moreover, has dual functions as a membrane-bound androgen receptor and as an androgen-dependent zinc transporter both of which are mediated through an inhibitory G protein (Gi) that mediates both MAP kinase and zinc signaling leading to the androgen-dependent apoptotic process. In Rattus norvegicus (Rat), this protein is Zinc transporter ZIP9.